The sequence spans 82 residues: Putative membrane protein insertion efficiency factor (82 aa).

Residues 61–82 (HEGGYDPVPKRKNKNSEGKREE) form a disordered region.

This sequence belongs to the UPF0161 family.

The protein resides in the cell inner membrane. In terms of biological role, could be involved in insertion of integral membrane proteins into the membrane. The polypeptide is Putative membrane protein insertion efficiency factor (Fusobacterium nucleatum subsp. nucleatum (strain ATCC 25586 / DSM 15643 / BCRC 10681 / CIP 101130 / JCM 8532 / KCTC 2640 / LMG 13131 / VPI 4355)).